A 303-amino-acid chain; its full sequence is UDP-3-O-acyl-N-acetylglucosamine deacetylase (303 aa).

Histidine 77, histidine 236, and aspartate 240 together coordinate Zn(2+). Histidine 263 serves as the catalytic Proton donor.

The protein belongs to the LpxC family. It depends on Zn(2+) as a cofactor.

It carries out the reaction a UDP-3-O-[(3R)-3-hydroxyacyl]-N-acetyl-alpha-D-glucosamine + H2O = a UDP-3-O-[(3R)-3-hydroxyacyl]-alpha-D-glucosamine + acetate. It functions in the pathway glycolipid biosynthesis; lipid IV(A) biosynthesis; lipid IV(A) from (3R)-3-hydroxytetradecanoyl-[acyl-carrier-protein] and UDP-N-acetyl-alpha-D-glucosamine: step 2/6. Catalyzes the hydrolysis of UDP-3-O-myristoyl-N-acetylglucosamine to form UDP-3-O-myristoylglucosamine and acetate, the committed step in lipid A biosynthesis. The sequence is that of UDP-3-O-acyl-N-acetylglucosamine deacetylase from Ruthia magnifica subsp. Calyptogena magnifica.